The chain runs to 757 residues: Catalase-peroxidase (757 aa).

The tract at residues 1–28 is disordered; sequence MENQSNDISKCPFHNGSMDNQAASGTKN. A compositionally biased stretch (polar residues) spans 17-28; that stretch reads SMDNQAASGTKN. The segment at residues 100–247 is a cross-link (tryptophyl-tyrosyl-methioninium (Trp-Tyr) (with M-273)); the sequence is WHSAGTYRVH…LAAVQMGLIY (148 aa). The Proton acceptor role is filled by His101. The segment at residues 247-273 is a cross-link (tryptophyl-tyrosyl-methioninium (Tyr-Met) (with W-100)); it reads YVNPEGPDGNPDPILAAKDIRDTFGRM. Residue His288 coordinates heme b.

It belongs to the peroxidase family. Peroxidase/catalase subfamily. As to quaternary structure, homodimer or homotetramer. Heme b is required as a cofactor. Post-translationally, formation of the three residue Trp-Tyr-Met cross-link is important for the catalase, but not the peroxidase activity of the enzyme.

It catalyses the reaction H2O2 + AH2 = A + 2 H2O. The catalysed reaction is 2 H2O2 = O2 + 2 H2O. Bifunctional enzyme with both catalase and broad-spectrum peroxidase activity. This is Catalase-peroxidase from Flavobacterium johnsoniae (strain ATCC 17061 / DSM 2064 / JCM 8514 / BCRC 14874 / CCUG 350202 / NBRC 14942 / NCIMB 11054 / UW101) (Cytophaga johnsonae).